We begin with the raw amino-acid sequence, 382 residues long: MTEFWLISAPGEKTCQQTWEKLHAATTKNNNLAVSSKFNIPDLKVGTLDVLVGLSDELAKLDAFVEGVVKKVAQYMADVLEDSKDKVQENLLANGVDLVTYITRFQWDMAKYPIKQSLKNISEIIAKGVTQIDNDLKSRASAYNNLKGNLQNLERKNAGSLLTRSLAEIVKKDDFVLDSEYLVTLLVVVPKLNHNDWIKQYETLAEMVVPRSSNVLSEDQDSYLCNVTLFRKAVDDFRHKARENKFIVRDFQYNEEEMKADKEEMNRLSTDKKKQFGPLVRWLKVNFSEAFIAWIHVKALRVFVESVLRYGLPVNFQAMLLQPNKKTMKKLREVLYELYKHLDSSAAAIIDAPMDIPGLNLSQQEYYPYVYYKIDCNLLEFK.

At Thr2 the chain carries N-acetylthreonine.

It belongs to the V-ATPase C subunit family. In terms of assembly, V-ATPase is a heteromultimeric enzyme made up of two complexes: the ATP-hydrolytic V1 complex and the proton translocation V0 complex. The V1 complex consists of three catalytic AB heterodimers that form a heterohexamer, three peripheral stalks each consisting of EG heterodimers, one central rotor including subunits D and F, and the regulatory subunits C and H. The proton translocation complex V0 consists of the proton transport subunit a, a ring of proteolipid subunits c9c'', rotary subunit d, subunits e and f, and the accessory subunits ATP6AP1/Ac45 and ATP6AP2/PRR. In terms of tissue distribution, expressed in brain (at protein level).

The protein localises to the cytoplasmic vesicle. It is found in the secretory vesicle. Its subcellular location is the synaptic vesicle membrane. It localises to the clathrin-coated vesicle membrane. Its function is as follows. Subunit of the V1 complex of vacuolar(H+)-ATPase (V-ATPase), a multisubunit enzyme composed of a peripheral complex (V1) that hydrolyzes ATP and a membrane integral complex (V0) that translocates protons. V-ATPase is responsible for acidifying and maintaining the pH of intracellular compartments and in some cell types, is targeted to the plasma membrane, where it is responsible for acidifying the extracellular environment. Subunit C is necessary for the assembly of the catalytic sector of the enzyme and is likely to have a specific function in its catalytic activity. In Bos taurus (Bovine), this protein is V-type proton ATPase subunit C 1 (ATP6V1C1).